The primary structure comprises 443 residues: Probable cytosolic iron-sulfur protein assembly protein 1 (443 aa).

2 disordered regions span residues 1-27 and 95-124; these read MSDP…WQTA and REEQ…DDDE. Residues 8–21 show a composition bias toward low complexity; sequence TLSPLATLTPPSSS. WD repeat units follow at residues 14–57 and 61–103; these read TLTP…LLHS and GHKR…GNED. The span at 113 to 124 shows a compositional bias: acidic residues; sequence AEDEDGRDDDDE. WD repeat units lie at residues 135–174, 180–219, 221–248, 255–294, 323–362, and 391–440; these read GHES…NFET, EHDG…WVQV, CIAG…KDFR, SEEQ…RAEN, VHER…QTPN, and AHSV…DPPQ.

It belongs to the WD repeat CIA1 family.

Its function is as follows. Essential component of the cytosolic iron-sulfur (Fe/S) protein assembly machinery. Required for the maturation of extramitochondrial Fe/S proteins. The chain is Probable cytosolic iron-sulfur protein assembly protein 1 from Phaeosphaeria nodorum (strain SN15 / ATCC MYA-4574 / FGSC 10173) (Glume blotch fungus).